A 216-amino-acid polypeptide reads, in one-letter code: Cytidylate kinase (216 aa).

An ATP-binding site is contributed by 7 to 15 (GPSGTGKST).

It belongs to the cytidylate kinase family. Type 1 subfamily.

It localises to the cytoplasm. It catalyses the reaction CMP + ATP = CDP + ADP. It carries out the reaction dCMP + ATP = dCDP + ADP. The chain is Cytidylate kinase from Chlamydia trachomatis serovar A (strain ATCC VR-571B / DSM 19440 / HAR-13).